Here is a 492-residue protein sequence, read N- to C-terminus: Putative cytochrome P450 136 (492 aa).

Cys-439 provides a ligand contact to heme.

Belongs to the cytochrome P450 family. Heme serves as cofactor.

The protein is Putative cytochrome P450 136 (cyp136) of Mycobacterium tuberculosis (strain CDC 1551 / Oshkosh).